The sequence spans 581 residues: Colicin-E2 (581 aa).

Disordered regions lie at residues Met-1–Gly-74, Gln-242–Asp-269, Pro-293–Glu-320, Ala-421–Lys-488, and Asp-513–Ile-566. The span at Ile-20 to Asp-35 shows a compositional bias: gly residues. Low complexity predominate over residues Gly-36–Pro-45. Residues Trp-46–Gly-74 are compositionally biased toward gly residues. Polar residues predominate over residues Gln-242 to Asn-251. 3 stretches are compositionally biased toward basic and acidic residues: residues Val-296–Glu-320, Gln-429–Arg-452, and Pro-464–Lys-475. The span at Phe-518–Gln-527 shows a compositional bias: polar residues. Basic and acidic residues predominate over residues Arg-535–Ile-554. Zn(2+)-binding residues include His-549, His-574, and His-578.

This sequence belongs to the colicin/pyosin nuclease family.

Functionally, this plasmid-coded bactericidal protein is an endonuclease active on both single- and double-stranded DNA but with undefined specificity. Colicins are polypeptide toxins produced by and active against E.coli and closely related bacteria. The chain is Colicin-E2 (col) from Escherichia coli.